The primary structure comprises 327 residues: T-cell surface glycoprotein CD1a (327 aa).

An N-terminal signal peptide occupies residues 1-16 (MLFLLLPLLAVLPGDG). At 17–300 (NADGLKEPLS…VLYWEHHSSV (284 aa)) the chain is on the extracellular side. 3 N-linked (GlcNAc...) asparagine glycosylation sites follow: N37, N60, and N74. 90–94 (RTIRS) provides a ligand contact to a D-galactosylceramide. 2 disulfide bridges follow: C119–C183 and C223–C278. N-linked (GlcNAc...) asparagine glycosylation occurs at N145. A D-galactosylceramide contacts are provided by E171 and T175. The 108-residue stretch at 184 to 291 (PRFILGLLDA…HSSLEGQDIV (108 aa)) folds into the Ig-like domain. Residues 301–321 (GFIILAVIVPLLLLIGLALWF) traverse the membrane as a helical segment. Over 322–327 (RKRCFC) the chain is Cytoplasmic.

As to quaternary structure, heterodimer with B2M (beta-2-microglobulin). Interacts with CD74. In terms of tissue distribution, expressed on cortical thymocytes, epidermal Langerhans cells, dendritic cells, on certain T-cell leukemias, and in various other tissues.

The protein resides in the cell membrane. It is found in the membrane raft. It localises to the endosome membrane. Its function is as follows. Antigen-presenting protein that binds self and non-self lipid and glycolipid antigens and presents them to T-cell receptors on natural killer T-cells. This Homo sapiens (Human) protein is T-cell surface glycoprotein CD1a (CD1A).